Here is a 1856-residue protein sequence, read N- to C-terminus: Autophagy-related protein 2 (1856 aa).

Disordered regions lie at residues 123–167 (NTND…TGNK), 229–283 (LRTL…GNES), 309–328 (KSAA…DKED), 395–428 (TKSR…DASH), 1157–1177 (LNGT…SSLM), 1614–1647 (MLGG…VEVA), and 1719–1741 (KLQP…EDED). Over residues 137-147 (ASEDDDEDDID) the composition is skewed to acidic residues. The segment covering 250–262 (KKQQGSDNDSPTD) has biased composition (polar residues). The segment covering 270-280 (NDNDDDDDDYG) has biased composition (acidic residues). Residues 412 to 424 (DNDEIPEDQSESD) show a composition bias toward acidic residues. Residues 1157–1170 (LNGTENGSTSESSS) show a composition bias toward low complexity. Residues 1621–1639 (SVRSPNLGGSDNRRNSNAS) are compositionally biased toward polar residues. Residues 1732–1741 (TEEEEDEDED) are compositionally biased toward acidic residues.

Belongs to the ATG2 family.

Its subcellular location is the preautophagosomal structure membrane. The protein resides in the endoplasmic reticulum membrane. The enzyme catalyses a 1,2-diacyl-sn-glycero-3-phosphocholine(in) = a 1,2-diacyl-sn-glycero-3-phosphocholine(out). It carries out the reaction a 1,2-diacyl-sn-glycero-3-phospho-L-serine(in) = a 1,2-diacyl-sn-glycero-3-phospho-L-serine(out). The catalysed reaction is a 1,2-diacyl-sn-glycero-3-phosphoethanolamine(in) = a 1,2-diacyl-sn-glycero-3-phosphoethanolamine(out). Its function is as follows. Lipid transfer protein required for autophagosome completion and peroxisome degradation. Tethers the edge of the isolation membrane (IM) to the endoplasmic reticulum (ER) and mediates direct lipid transfer from ER to IM for IM expansion. ATG2/SPO72 binds to the ER exit site (ERES), which is the membrane source for autophagosome formation, using basic residues in its N-terminal region (NR) and to the expanding edge of the IM through its C-terminal region. The latter binding is assisted by an ATG18-PtdIns3P interaction. ATG2/SPO72 then extracts phospholipids from the membrane source using its NR and transfers them to ATG9 to the IM through its predicted beta-sheet-rich structure for membrane expansion. The chain is Autophagy-related protein 2 (SPO72) from Candida albicans (strain SC5314 / ATCC MYA-2876) (Yeast).